The following is a 283-amino-acid chain: MNTVKTVRELRAAVARARSEGKRIGFVPTMGNLHAGHAALVKKAGERADFVVVSIFVNPLQFGPSEDLDKYPRTLAADQERLLEAGCHLLFTPGVEEMYPDGMDGQTRIHVPGVSEGLCGASRPGHFEGVATVVSKLLNMVQPDLALFGEKDFQQLAVIRKLVRDLNLPVQIFGEPTVRAADGLALSSRNGYLDEQQRAAAPAIYRTLRQLGERIRAGAEDFPALLADARQALEQAGLRPDYLEIREPISLRPGVPGDRQLVILAAAYLGGTRLIDNLSVHLD.

30 to 37 (MGNLHAGH) lines the ATP pocket. Histidine 37 serves as the catalytic Proton donor. Glutamine 61 lines the (R)-pantoate pocket. Beta-alanine is bound at residue glutamine 61. 149–152 (GEKD) contributes to the ATP binding site. A (R)-pantoate-binding site is contributed by glutamine 155. Residues valine 178 and 186–189 (LSSR) contribute to the ATP site.

It belongs to the pantothenate synthetase family. In terms of assembly, homodimer.

The protein localises to the cytoplasm. The enzyme catalyses (R)-pantoate + beta-alanine + ATP = (R)-pantothenate + AMP + diphosphate + H(+). Its pathway is cofactor biosynthesis; (R)-pantothenate biosynthesis; (R)-pantothenate from (R)-pantoate and beta-alanine: step 1/1. Its function is as follows. Catalyzes the condensation of pantoate with beta-alanine in an ATP-dependent reaction via a pantoyl-adenylate intermediate. This is Pantothenate synthetase from Pseudomonas paraeruginosa (strain DSM 24068 / PA7) (Pseudomonas aeruginosa (strain PA7)).